Reading from the N-terminus, the 122-residue chain is Large ribosomal subunit protein uL14c (122 aa).

The protein belongs to the universal ribosomal protein uL14 family. Part of the 50S ribosomal subunit.

The protein localises to the plastid. The protein resides in the chloroplast. Its function is as follows. Binds to 23S rRNA. The sequence is that of Large ribosomal subunit protein uL14c (rpl14) from Bigelowiella natans (Pedinomonas minutissima).